The primary structure comprises 103 residues: Urease subunit gamma (103 aa).

Belongs to the urease gamma subunit family. Heterotrimer of UreA (gamma), UreB (beta) and UreC (alpha) subunits. Three heterotrimers associate to form the active enzyme.

The protein localises to the cytoplasm. The catalysed reaction is urea + 2 H2O + H(+) = hydrogencarbonate + 2 NH4(+). It participates in nitrogen metabolism; urea degradation; CO(2) and NH(3) from urea (urease route): step 1/1. The protein is Urease subunit gamma of Paracoccus denitrificans (strain Pd 1222).